The sequence spans 562 residues: Formate--tetrahydrofolate ligase (562 aa).

Residue 71–78 (TPAGEGKS) coordinates ATP.

Belongs to the formate--tetrahydrofolate ligase family.

It catalyses the reaction (6S)-5,6,7,8-tetrahydrofolate + formate + ATP = (6R)-10-formyltetrahydrofolate + ADP + phosphate. It functions in the pathway one-carbon metabolism; tetrahydrofolate interconversion. The protein is Formate--tetrahydrofolate ligase of Bacillus thuringiensis (strain Al Hakam).